A 765-amino-acid chain; its full sequence is MSTKTSREIALERRKAMSDGGKKAALHSSSTKDRVRSSQDINSTGATSSNKKVLTSPSKSNIPANKIARKSTSSKLSSKELGIERRKAMSTHGKSAINSSDRTRTDVKSDIKVNKVISTEKPQALKDHNNNIKDNQVVKQNIKRRINQKRKPITNTSRDIVLARREAQSKHGKSASKQNTSAASLARRGDPDLSSREISQRVRELRSKTGSTSKQGNGKCRPCGPNKNGSKLNIADASWKVGKSETDSGQTVTGTQANRSLKTTGNEASTCRTVTGTQYMGAEVTGQFCQDKPKYKQPIRASVTTTTSGNKVTGNEVGRSEKVTGDEPGTCKNLTGTEYISANQSKKYCGEVIKKPSKVMQSITTDGLKVSGSLPGRSSLVTGDESGSGKQLTGDQYLGSEPSPKGKSFEKVGSYDTLNGNNVTGTGVGRSDYVTGNEYGSCKNLTGDEYIGSQQYEKFCGSTPKPEARKVGLSLSSKSNLISGTMTGRSKIVTGDEPGSCKVLTGTPYAGLDQINDNCNAEIADDMKSRATVNSGNNSNARLTGLQPGIGGVMTGATKGSCKNLTGTPYIGGDQFLSNCETPPNDASYANQEKSASNSWKEFSVNSPSREKYSAKNTEGVTGNRYEDSSKITGPFDMAEDKVTGTEQFRFEPNKNMTYKQKMKQEESQNIDIPTDKKEPSKITGEGQSAGNITGDDWDRGDKVTGTEGVSARKRNPSRAGFMGAMPPVDNKRNDETEKPDFLITGSSGNTRDGQLVTFSGGARG.

Residues 1–22 (MSTKTSREIALERRKAMSDGGK) are compositionally biased toward basic and acidic residues. Disordered stretches follow at residues 1–107 (MSTK…RTDV) and 165–229 (REAQ…NKNG). The interval 1–215 (MSTKTSREIA…RSKTGSTSKQ (215 aa)) is N-terminal domain. Residues 7–22 (REIALERRKAMSDGGK) form an N-repeat 1 repeat. The span at 38–63 (SQDINSTGATSSNKKVLTSPSKSNIP) shows a compositional bias: polar residues. The span at 77 to 87 (SSKELGIERRK) shows a compositional bias: basic and acidic residues. 3 N-repeat repeats span residues 79 to 94 (KELG…THGK), 158 to 173 (RDIV…KHGK), and 196 to 211 (REIS…KTGS). The span at 187–207 (RRGDPDLSSREISQRVRELRS) shows a compositional bias: basic and acidic residues. Residues 216–586 (GNGKCRPCGP…LSNCETPPND (371 aa)) are middle region. M-repeat repeat units lie at residues 240 to 289 (KVGK…GQFC), 300 to 349 (RASV…KKYC), 358 to 397 (KVMQ…GDQY), 411 to 460 (KVGS…EKFC), 470 to 519 (KVGL…NDNC), and 530 to 580 (RATV…LSNC). Disordered regions lie at residues 306–328 (TTSG…GDEP) and 367–413 (GLKV…EKVG). A C-terminal domain region spans residues 589 to 734 (YANQEKSASN…AMPPVDNKRN (146 aa)). 2 C-repeat repeats span residues 604–648 (SVNS…GTEQ) and 677–711 (KKEP…EGVS). 2 disordered regions span residues 611–637 (EKYS…GPFD) and 656–765 (NMTY…GARG). A compositionally biased stretch (basic and acidic residues) spans 730-741 (DNKRNDETEKPD). The interval 735–765 (DETEKPDFLITGSSGNTRDGQLVTFSGGARG) is C-terminal peptide.

The protein belongs to the CsoS2 family. In terms of assembly, probably interacts with the carboxysome major shell protein CsoS1 via the N-terminal domain. A CsoS1-CsoS1D-CsoS2 complex can be isolated following expression in E.coli. Interacts via its N-terminal repeats with RuBisCO. In terms of processing, unlike H.neapolitanus and predictions for P.marinus strain MIT 9313, this protein is not thought to have ribosomal frameshifting.

Its subcellular location is the carboxysome. Required for alpha-carboxysome (Cb) assembly, mediates interaction between RuBisCO and the Cb shell. The protein is probably highly flexible. The C-terminal repeats act as the encapsulation signal to target proteins to the Cb; they are necessary and sufficient to target both CsoS2 and foreign proteins to the Cb. The N-terminal repeats of this protein bind simultaneously to both subunits of RuBisCO. Probably also interacts with the major shell proteins (CsoS1); that interaction would increase the local concentration of CsoS2 so that it can condense RuBisCO and full carboxysomes can be formed. There are estimated to be 163 CsoS2 proteins per carboxysome; unlike H.neapolitanus only 1 form is seen. This chain is Carboxysome assembly protein CsoS2, found in Prochlorococcus marinus subsp. pastoris (strain CCMP1986 / NIES-2087 / MED4).